The following is a 190-amino-acid chain: Endoribonuclease YbeY (190 aa).

The Zn(2+) site is built by His147, His151, and His157.

The protein belongs to the endoribonuclease YbeY family. Requires Zn(2+) as cofactor.

It localises to the cytoplasm. Single strand-specific metallo-endoribonuclease involved in late-stage 70S ribosome quality control and in maturation of the 3' terminus of the 16S rRNA. This chain is Endoribonuclease YbeY, found in Nitrobacter winogradskyi (strain ATCC 25391 / DSM 10237 / CIP 104748 / NCIMB 11846 / Nb-255).